Here is a 165-residue protein sequence, read N- to C-terminus: Nucleoside-triphosphatase THEP1 (165 aa).

ATP contacts are provided by residues glycine 7–threonine 14 and leucine 93–glycine 100.

The protein belongs to the THEP1 NTPase family.

It catalyses the reaction a ribonucleoside 5'-triphosphate + H2O = a ribonucleoside 5'-diphosphate + phosphate + H(+). In terms of biological role, has nucleotide phosphatase activity towards ATP, GTP, CTP, TTP and UTP. May hydrolyze nucleoside diphosphates with lower efficiency. The sequence is that of Nucleoside-triphosphatase THEP1 from Archaeoglobus fulgidus (strain ATCC 49558 / DSM 4304 / JCM 9628 / NBRC 100126 / VC-16).